The following is a 440-amino-acid chain: 3-phosphoshikimate 1-carboxyvinyltransferase (440 aa).

Lys19, Ser20, and Arg24 together coordinate 3-phosphoshikimate. A phosphoenolpyruvate-binding site is contributed by Lys19. Residues Gly92 and Arg121 each coordinate phosphoenolpyruvate. 3-phosphoshikimate contacts are provided by Ser166, Gln168, Asp315, and Lys342. Residue Gln168 participates in phosphoenolpyruvate binding. Residue Asp315 is the Proton acceptor of the active site. Phosphoenolpyruvate contacts are provided by Arg346 and Arg399.

The protein belongs to the EPSP synthase family. In terms of assembly, monomer.

The protein localises to the cytoplasm. The enzyme catalyses 3-phosphoshikimate + phosphoenolpyruvate = 5-O-(1-carboxyvinyl)-3-phosphoshikimate + phosphate. Its pathway is metabolic intermediate biosynthesis; chorismate biosynthesis; chorismate from D-erythrose 4-phosphate and phosphoenolpyruvate: step 6/7. Catalyzes the transfer of the enolpyruvyl moiety of phosphoenolpyruvate (PEP) to the 5-hydroxyl of shikimate-3-phosphate (S3P) to produce enolpyruvyl shikimate-3-phosphate and inorganic phosphate. The sequence is that of 3-phosphoshikimate 1-carboxyvinyltransferase from Leptospira borgpetersenii serovar Hardjo-bovis (strain JB197).